A 117-amino-acid chain; its full sequence is uncharacterized protein (117 aa).

2 helical membrane passes run 43–63 (APIM…LMLL) and 73–93 (AVQH…VFIV).

The protein resides in the cell membrane. This is an uncharacterized protein from Bacillus subtilis (strain 168).